The sequence spans 598 residues: Nuclear receptor subfamily 4 group A member 2 (598 aa).

The disordered stretch occupies residues 1-22 (MPCVQAQYGSSPQGASPASQSY). Residues 8–22 (YGSSPQGASPASQSY) are compositionally biased toward low complexity. The segment at residues 260–335 (EGLCAVCGDN…VGMVKEVVRT (76 aa)) is a DNA-binding region (nuclear receptor). NR C4-type zinc fingers lie at residues 263-283 (CAVC…CEGC) and 299-323 (CLAN…FQKC). The short motif at 287 to 314 (FKRTVQKNAKYVCLANKNCPVDKRRRNR) is the Bipartite nuclear localization signal (NLS1) element. The interval 337-361 (SLKGRRGRLPSKPKSPQEPSPPSPP) is disordered. Residues 338 to 350 (LKGRRGRLPSKPK) carry the Nuclear localization signal (NLS1) motif. Residues 352–361 (PQEPSPPSPP) are compositionally biased toward pro residues. Residues 360 to 595 (PPVSLISALV…AIIDKLFLDT (236 aa)) form the NR LBD domain. Residues 443-452 (FLELFVLRLA) carry the nuclear export sequence (NES1) motif. The nuclear export sequence (NES2) signature appears at 568 to 577 (QGLQRIFYLK).

It belongs to the nuclear hormone receptor family. NR4 subfamily. As to quaternary structure, interacts with SFPQ, NCOR2, SIN3A and HADC1. The interaction with NCOR2 increases in the absence of PITX3. Interacts with PER2. In terms of tissue distribution, expressed in a number of cell lines of T-cell, B-cell and fibroblast origin. Strong expression in brain tissue.

The protein localises to the cytoplasm. It is found in the nucleus. Functionally, transcriptional regulator which is important for the differentiation and maintenance of meso-diencephalic dopaminergic (mdDA) neurons during development. It is crucial for expression of a set of genes such as SLC6A3, SLC18A2, TH and DRD2 which are essential for development of mdDA neurons. This chain is Nuclear receptor subfamily 4 group A member 2 (NR4A2), found in Homo sapiens (Human).